Consider the following 369-residue polypeptide: DNA replication and repair protein RecF (369 aa).

30-37 (GDNGSGKT) contributes to the ATP binding site.

This sequence belongs to the RecF family.

The protein localises to the cytoplasm. In terms of biological role, the RecF protein is involved in DNA metabolism; it is required for DNA replication and normal SOS inducibility. RecF binds preferentially to single-stranded, linear DNA. It also seems to bind ATP. The protein is DNA replication and repair protein RecF of Pseudomonas paraeruginosa (strain DSM 24068 / PA7) (Pseudomonas aeruginosa (strain PA7)).